The sequence spans 83 residues: Cell division topological specificity factor (83 aa).

Belongs to the MinE family.

In terms of biological role, prevents the cell division inhibition by proteins MinC and MinD at internal division sites while permitting inhibition at polar sites. This ensures cell division at the proper site by restricting the formation of a division septum at the midpoint of the long axis of the cell. The protein is Cell division topological specificity factor of Buchnera aphidicola subsp. Schizaphis graminum (strain Sg).